The primary structure comprises 137 residues: Interferon-induced transmembrane protein 3 (137 aa).

Topologically, residues 1–57 (MNHTSQAFITAASGGQPPNYERIKEEYEVAEMGAPHGSASVRTTVINMPREVSVPDH) are cytoplasmic. The residue at position 20 (Y20) is a Phosphotyrosine. A Glycyl lysine isopeptide (Lys-Gly) (interchain with G-Cter in ubiquitin) cross-link involves residue K24. The residue at position 27 (Y27) is a Phosphotyrosine. Residues 58-78 (VVWSLFNTLFMNFCCLGFIAY) constitute an intramembrane region (helical). The tract at residues 60-93 (WSLFNTLFMNFCCLGFIAYAYSVKSRDRKMVGDV) is interaction with SPP1. S-palmitoyl cysteine attachment occurs at residues C71 and C72. Residues 79-109 (AYSVKSRDRKMVGDVTGAQAYASTAKCLNIS) are Cytoplasmic-facing. Residues K83, K88, and K104 each participate in a glycyl lysine isopeptide (Lys-Gly) (interchain with G-Cter in ubiquitin) cross-link. The S-palmitoyl cysteine moiety is linked to residue C105. The interaction with VAPA stretch occupies residues 108–133 (ISTLVLSILMVVITIVSVIIIVLNAQ). A helical membrane pass occupies residues 110 to 130 (TLVLSILMVVITIVSVIIIVL). Residues 131 to 137 (NAQNLHT) are Extracellular-facing.

The protein belongs to the CD225/Dispanin family. Interacts with ATP6V0B. Interacts with CD81. Interacts with SPP1; the interaction reduces OPN expression. Interacts with BRI3. Polyubiquitinated with both 'Lys-48' and 'Lys-63' linkages. Ubiquitination negatively regulates antiviral activity. Lys-24 is the most prevalent ubiquitination site. In terms of processing, phosphorylation at Tyr-20 is required for endosomal and lysosomal location. Expressed in acinar cell. Predominantly expressed in nascent primordial germ cells, as well as in gonadal germ cells.

The protein localises to the cell membrane. It is found in the late endosome membrane. Its subcellular location is the early endosome membrane. The protein resides in the lysosome membrane. It localises to the cytoplasm. The protein localises to the perinuclear region. Functionally, IFN-induced antiviral protein which disrupts intracellular cholesterol homeostasis. Inhibits the entry of viruses to the host cell cytoplasm by preventing viral fusion with cholesterol depleted endosomes. May inactivate new enveloped viruses which buds out of the infected cell, by letting them go out with a cholesterol depleted membrane. Active against multiple viruses, including influenza A virus, SARS coronaviruses (SARS-CoV and SARS-CoV-2), Marburg virus (MARV), Ebola virus (EBOV), Dengue virus (DNV), West Nile virus (WNV), human immunodeficiency virus type 1 (HIV-1), hepatitis C virus (HCV) and vesicular stomatitis virus (VSV). Can inhibit: influenza virus hemagglutinin protein-mediated viral entry, MARV and EBOV GP1,2-mediated viral entry, SARS-CoV and SARS-CoV-2 S protein-mediated viral entry and VSV G protein-mediated viral entry. Plays a critical role in the structural stability and function of vacuolar ATPase (v-ATPase). Establishes physical contact with the v-ATPase of endosomes which is critical for proper clathrin localization and is also required for the function of the v-ATPase to lower the pH in phagocytic endosomes thus establishing an antiviral state. In hepatocytes, IFITM proteins act in a coordinated manner to restrict HCV infection by targeting the endocytosed HCV virion for lysosomal degradation. IFITM2 and IFITM3 display anti-HCV activity that may complement the anti-HCV activity of IFITM1 by inhibiting the late stages of HCV entry, possibly in a coordinated manner by trapping the virion in the endosomal pathway and targeting it for degradation at the lysosome. Exerts opposing activities on SARS-CoV-2, including amphipathicity-dependent restriction of virus at endosomes and amphipathicity-independent enhancement of infection at the plasma membrane. The sequence is that of Interferon-induced transmembrane protein 3 from Mus musculus (Mouse).